Here is a 228-residue protein sequence, read N- to C-terminus: Casparian strip membrane protein 2 (228 aa).

Residues 1-65 (MSTSDAAATV…FRRADRGSRC (65 aa)) are Cytoplasmic-facing. A helical transmembrane segment spans residues 66–86 (VALLDLVLRVAAFGPALAAAI). The Extracellular portion of the chain corresponds to 87 to 113 (ATGTSDETLSVFTQFFQFHARFDDFPA). A helical membrane pass occupies residues 114-134 (LLFFMVANAIAAGYLVLSLPF). At 135-149 (SAVVVLRPQAIGLRH) the chain is on the cytoplasmic side. Residues 150–170 (LLLICDLIIAALLTAAAAAAA) traverse the membrane as a helical segment. At 171 to 201 (AIVDLAHSGNQRANWVPICMQFHGFCQRTSG) the chain is on the extracellular side. The helical transmembrane segment at 202 to 222 (AVVASFLAVLVLLFLVILAAF) threads the bilayer. Over 223–228 (TIRKRC) the chain is Cytoplasmic.

It belongs to the Casparian strip membrane proteins (CASP) family. In terms of assembly, homodimer and heterodimers.

Its subcellular location is the cell membrane. Regulates membrane-cell wall junctions and localized cell wall deposition. Required for establishment of the Casparian strip membrane domain (CSD) and the subsequent formation of Casparian strips, a cell wall modification of the root endodermis that determines an apoplastic barrier between the intraorganismal apoplasm and the extraorganismal apoplasm and prevents lateral diffusion. The chain is Casparian strip membrane protein 2 from Zea mays (Maize).